Consider the following 176-residue polypeptide: Ribosome maturation factor RimM (176 aa).

The PRC barrel domain occupies 104–176; sequence EDEYYFYEIL…KIIAKEMEWI (73 aa).

It belongs to the RimM family. In terms of assembly, binds ribosomal protein uS19.

Its subcellular location is the cytoplasm. In terms of biological role, an accessory protein needed during the final step in the assembly of 30S ribosomal subunit, possibly for assembly of the head region. Essential for efficient processing of 16S rRNA. May be needed both before and after RbfA during the maturation of 16S rRNA. It has affinity for free ribosomal 30S subunits but not for 70S ribosomes. The chain is Ribosome maturation factor RimM from Thermotoga maritima (strain ATCC 43589 / DSM 3109 / JCM 10099 / NBRC 100826 / MSB8).